Reading from the N-terminus, the 748-residue chain is WD repeat-containing protein 91 (748 aa).

A coiled-coil region spans residues 183–228; it reads QRTNQVQEENEVLRQKLFALQAEIHRLKKEEQQQEEEAAALVQHKL. A Phosphoserine modification is found at serine 257. Over residues 266–279 the composition is skewed to low complexity; that stretch reads LLPQSKKSPSRLSP. The tract at residues 266-368 is disordered; the sequence is LLPQSKKSPS…PEVSGAEAEP (103 aa). Polar residues predominate over residues 284–300; sequence PQAQSSAKKDSFSSQAT. Serine 289 and serine 294 each carry phosphoserine. The span at 333-344 shows a compositional bias: basic and acidic residues; that stretch reads RLQDHGKERREL. Residues 345 to 354 are compositionally biased toward polar residues; sequence LSTSSSQSQC. 7 WD repeats span residues 407-446, 449-489, 512-556, 561-600, 603-642, 665-703, and 710-748; these read EHHS…QTKA, ISKS…NLCE, VCSA…QQLQ, PEPI…CAMS, AHCG…LKVS, VQVP…KVLE, and GHRA…AHKL.

It belongs to the WD repeat WDR91 family. Interacts with WDR81; involved in early to late endosome cargo transport. Interacts with BECN1; negatively regulates the PI3 kinase/PI3K activity associated with endosomal membranes.

It is found in the early endosome membrane. The protein localises to the late endosome membrane. Its function is as follows. Functions as a negative regulator of the PI3 kinase/PI3K activity associated with endosomal membranes via BECN1, a core subunit of the PI3K complex. By modifying the phosphatidylinositol 3-phosphate/PtdInsP3 content of endosomal membranes may regulate endosome fusion, recycling, sorting and early to late endosome transport. It is for instance, required for the delivery of cargos like BST2/tetherin from early to late endosome and thereby participates indirectly to their degradation by the lysosome. May play a role in meiosis. This is WD repeat-containing protein 91 from Mus musculus (Mouse).